Consider the following 72-residue polypeptide: MAKDDVIEVDGKVIEALPNATFRVELDNKHVILCHIAGRMRMHYIKILPGDRVKIELTPYSLDKGRITFRYK.

The 72-residue stretch at 1 to 72 (MAKDDVIEVD…DKGRITFRYK (72 aa)) folds into the S1-like domain.

Belongs to the IF-1 family. Component of the 30S ribosomal translation pre-initiation complex which assembles on the 30S ribosome in the order IF-2 and IF-3, IF-1 and N-formylmethionyl-tRNA(fMet); mRNA recruitment can occur at any time during PIC assembly.

The protein localises to the cytoplasm. One of the essential components for the initiation of protein synthesis. Stabilizes the binding of IF-2 and IF-3 on the 30S subunit to which N-formylmethionyl-tRNA(fMet) subsequently binds. Helps modulate mRNA selection, yielding the 30S pre-initiation complex (PIC). Upon addition of the 50S ribosomal subunit IF-1, IF-2 and IF-3 are released leaving the mature 70S translation initiation complex. The chain is Translation initiation factor IF-1 from Wolinella succinogenes (strain ATCC 29543 / DSM 1740 / CCUG 13145 / JCM 31913 / LMG 7466 / NCTC 11488 / FDC 602W) (Vibrio succinogenes).